A 337-amino-acid chain; its full sequence is Cytoskeleton protein RodZ (337 aa).

Residues 1 to 111 (MNTEATHDQN…LGKRRKKRDG (111 aa)) are Cytoplasmic-facing. An HTH cro/C1-type domain is found at 19–71 (LRNAREQLGLSQQAVAERLCLKVSTVRDIEEDKAPADLASTFLRGYIRSYARL). Residues 30–49 (QQAVAERLCLKVSTVRDIEE) constitute a DNA-binding region (H-T-H motif). The chain crosses the membrane as a helical; Signal-anchor for type II membrane protein span at residues 112–132 (WLMTFTWLVLFVVIGLSGAWW). At 133 to 337 (WQDHKAQQEE…TLNAEQSPAQ (205 aa)) the chain is on the periplasmic side. Positions 145–167 (TMADQSSAELSSNSEQGQSVPLN) are enriched in polar residues. The tract at residues 145 to 235 (TMADQSSAEL…PTAATTPDGA (91 aa)) is disordered. Over residues 168-207 (TSTTTDPATTSTPPASVDTTATNTQTPAVTAPAPAVDPQQ) the composition is skewed to low complexity. Positions 208–218 (NAVVSPSQANV) are enriched in polar residues. Low complexity predominate over residues 219–235 (DTAATPAPTAATTPDGA).

It belongs to the RodZ family.

Its subcellular location is the cell inner membrane. Cytoskeletal protein that is involved in cell-shape control through regulation of the length of the long axis. This is Cytoskeleton protein RodZ from Shigella boydii serotype 4 (strain Sb227).